The primary structure comprises 665 residues: MDDGDLSFDFEGGLDQPPAGGGGGPAPHSSDPGGVGGGGGGGGPGDGGGHGRGRGRGSYRQTVCRHWLRGLCMKGEACGFLHQFDKARMPVCRFFRDFGECREPDCAYKHSYDDVKECNMYKMGFCPNGPNCRYKHVKLPGPPPPVEEVLQKILQIRSFNKFNQHRHNNYNQQGERPQHPQGSGLPNQNSIDNTTTTTAQPAVGQQAQTTNQQPPQQQQQQQQQQQQQQKPNTNDQVQSVPNGSSNQATRIATPLPQGPSRYFIVKSCNRENLEISVQQGIWATQRSNEAKLNEAFESIENVILIFSINRTRNFQGCAKMTSRIGGYIGGGNWKSAHGTAHYGRNFSIQWLKLCELSFQKTHHLRNPYNDNLPVKISRDCQELEPFIGEQLASLLYLEPDSELTAILIAAEAKKEEEKAKGVSADEAADNQDIVLFDDNEEEEEEESEEEEEGNGQESQGRGRGRGMMWPPQMPMLRGVGPMMGGRGFPPNMIGDGFGFGGGFGMPDPFGVPRGFPPFGPRFPGDFARGGPMPGMVFPGRPPQPGGMFPMGLEMMMGPGRGPLMGGLGMGGPGRPNRPVGMAPFMPPPPPPNNRGTKREQRRPGGERGDRYETTSDQGSRGHDATGNSGAEGARSQSGDRYGRSALRDDDSESDEEAAPRRSRKR.

A disordered region spans residues 1–55; it reads MDDGDLSFDFEGGLDQPPAGGGGGPAPHSSDPGGVGGGGGGGGPGDGGGHGRGRG. The span at 33 to 50 shows a compositional bias: gly residues; it reads GGVGGGGGGGGPGDGGGH. 3 C3H1-type zinc fingers span residues 58-85, 86-113, and 114-139; these read SYRQ…HQFD, KARM…HSYD, and DVKE…HVKL. Residues 167–256 are disordered; sequence HNNYNQQGER…QATRIATPLP (90 aa). Over residues 169–200 the composition is skewed to polar residues; it reads NYNQQGERPQHPQGSGLPNQNSIDNTTTTTAQ. Low complexity predominate over residues 205 to 238; that stretch reads QQAQTTNQQPPQQQQQQQQQQQQQQKPNTNDQVQ. A compositionally biased stretch (polar residues) spans 239–250; the sequence is SVPNGSSNQATR. In terms of domain architecture, YTH spans 260–395; sequence SRYFIVKSCN…FIGEQLASLL (136 aa). Positions 432 to 459 form a coiled coil; it reads DIVLFDDNEEEEEEESEEEEEGNGQESQ. Residues 439–454 show a composition bias toward acidic residues; the sequence is NEEEEEEESEEEEEGN. 2 disordered regions span residues 439–469 and 561–665; these read NEEE…GMMW and GPLM…SRKR. The span at 561 to 573 shows a compositional bias: gly residues; the sequence is GPLMGGLGMGGPG. Basic and acidic residues predominate over residues 596-623; the sequence is TKREQRRPGGERGDRYETTSDQGSRGHD.

This chain is Zinc finger CCCH domain-containing protein 45, found in Oryza sativa subsp. japonica (Rice).